The following is a 357-amino-acid chain: Peptide chain release factor 1 (357 aa).

An N5-methylglutamine modification is found at Gln232. A compositionally biased stretch (basic and acidic residues) spans 284–304 (AERAAERKGQIGSGDRSERIR). A disordered region spans residues 284–308 (AERAAERKGQIGSGDRSERIRTYNY).

The protein belongs to the prokaryotic/mitochondrial release factor family. In terms of processing, methylated by PrmC. Methylation increases the termination efficiency of RF1.

It localises to the cytoplasm. Its function is as follows. Peptide chain release factor 1 directs the termination of translation in response to the peptide chain termination codons UAG and UAA. This is Peptide chain release factor 1 from Maricaulis maris (strain MCS10) (Caulobacter maris).